We begin with the raw amino-acid sequence, 1107 residues long: Ubiquitin-associated protein 2-like (1107 aa).

Methionine 1 carries the post-translational modification N-acetylmethionine. The tract at residues 1 to 33 (MMTSVGTNRARGNWEQPQNQNQTQHKQRPQATA) is disordered. The 41-residue stretch at 49-89 (DFEEKVKQLIDITGKNQDECVIALHDCNGDVNRAINVLLEG) folds into the UBA domain. Residues 92–229 (DTHSWEMVGK…NTWNNTGHFE (138 aa)) are disordered. Residues 118–132 (EEGKENRDRDRDYSR) are compositionally biased toward basic and acidic residues. Residues 133 to 145 (RRGGPPRRGRGAS) show a composition bias toward basic residues. Asymmetric dimethylarginine is present on residues arginine 187 and arginine 190. The span at 213 to 226 (NYGNSSGNTWNNTG) shows a compositional bias: low complexity. 3 positions are modified to phosphoserine: serine 376, serine 380, and serine 436. Phosphothreonine is present on threonine 445. 3 disordered regions span residues 461–513 (AVAT…KKTS), 550–676 (SDYE…IPSL), and 689–814 (ANQH…LPPG). Phosphoserine is present on residues serine 474, serine 487, serine 490, serine 491, and serine 497. Composition is skewed to low complexity over residues 494 to 505 (QSSSPQPAQQKL) and 554 to 589 (STPT…SQES). The segment covering 590 to 656 (GYQSGPIQST…TQLQTTQSVE (67 aa)) has biased composition (polar residues). Serine 624, serine 625, serine 628, and serine 629 each carry phosphoserine. Residues 665 to 675 (SESPSTSSIPS) show a composition bias toward low complexity. Residues 689–713 (ANQHSSSLSGLSHTEEIPNTTTTQH) are compositionally biased toward polar residues. A compositionally biased stretch (low complexity) spans 714 to 804 (SSALSTQQNT…STRSSVATTS (91 aa)). A phosphoserine mark is found at serine 872 and serine 879. Disordered stretches follow at residues 885-921 (FGRG…LNPA) and 1060-1107 (QQPH…WGAN). 2 stretches are compositionally biased toward low complexity: residues 893-916 (PAPA…TQQT) and 1073-1087 (QDGQ…QTSS). A compositionally biased stretch (polar residues) spans 1088-1107 (IPQKPQTNKSAYNSYSWGAN).

In terms of assembly, interacts with BMI1. Part of a complex consisting of UBAP2L, BMI1 and RNF2. Interacts with G3BP1 (via NTF2 domain); promoting stress granule formation.

Its subcellular location is the nucleus. It localises to the chromosome. The protein localises to the cytoplasm. It is found in the stress granule. In terms of biological role, recruits the ubiquitination machinery to RNA polymerase II for polyubiquitination, removal and degradation, when the transcription-coupled nucleotide excision repair (TC-NER) machinery fails to resolve DNA damage. Plays an important role in the activity of long-term repopulating hematopoietic stem cells (LT-HSCs). Is a regulator of stress granule assembly, required for their efficient formation. Required for proper brain development and neocortex lamination. This is Ubiquitin-associated protein 2-like from Mus musculus (Mouse).